A 258-amino-acid chain; its full sequence is Aspartate/glutamate leucyltransferase (258 aa).

It belongs to the R-transferase family. Bpt subfamily.

It is found in the cytoplasm. The enzyme catalyses N-terminal L-glutamyl-[protein] + L-leucyl-tRNA(Leu) = N-terminal L-leucyl-L-glutamyl-[protein] + tRNA(Leu) + H(+). It catalyses the reaction N-terminal L-aspartyl-[protein] + L-leucyl-tRNA(Leu) = N-terminal L-leucyl-L-aspartyl-[protein] + tRNA(Leu) + H(+). Functionally, functions in the N-end rule pathway of protein degradation where it conjugates Leu from its aminoacyl-tRNA to the N-termini of proteins containing an N-terminal aspartate or glutamate. This chain is Aspartate/glutamate leucyltransferase, found in Rhodopseudomonas palustris (strain BisA53).